Here is a 429-residue protein sequence, read N- to C-terminus: MQKNNLNFDKQHIWHPYASMIQPTPCILVKSAKGIILKLHNGKKLIDGMSSWWSTIHGYNHPRLNNALKNQINKMSHVMFGGITHYPAISLCKKLIEITPNSLTRIFLSDSGSVSIEIAIKMILQYWQSLGKNKVIFLTIKKSYHGDTFAAMSVCDPKNSFHQFYHNFLPINIFADNPKCSFDGLWNKKDIISFKKLIQKHKDVVAAVILEPIVQSVGGMKFYHPNYLKQVRFLCDLYKIPLILDEIATGFGRTGKFFAFEHSNIVPDVLCIGKAITGGTITLSATLTTDKIANVISNSASGCLMHGPTFMGNPLACAAAYENILILQENKWKIQVKNIETCLRTYLFPLKTHYEVYDVRVLGAIGVVECYHYINISMMQNYFVKNNVWIRPFRKLIYLVPAYIIDNASLKKLINVISNALNYENFFMK.

Trp-52 lines the substrate pocket. 112-113 (GS) provides a ligand contact to pyridoxal 5'-phosphate. Residue Tyr-144 participates in substrate binding. Asp-245 provides a ligand contact to pyridoxal 5'-phosphate. The substrate site is built by Lys-274 and Gly-307. An N6-(pyridoxal phosphate)lysine modification is found at Lys-274. 308–309 (PT) lines the pyridoxal 5'-phosphate pocket. Residue Arg-391 coordinates substrate.

It belongs to the class-III pyridoxal-phosphate-dependent aminotransferase family. BioA subfamily. In terms of assembly, homodimer. Pyridoxal 5'-phosphate is required as a cofactor.

The protein resides in the cytoplasm. It catalyses the reaction (8S)-8-amino-7-oxononanoate + S-adenosyl-L-methionine = S-adenosyl-4-methylsulfanyl-2-oxobutanoate + (7R,8S)-7,8-diammoniononanoate. The protein operates within cofactor biosynthesis; biotin biosynthesis; 7,8-diaminononanoate from 8-amino-7-oxononanoate (SAM route): step 1/1. Its function is as follows. Catalyzes the transfer of the alpha-amino group from S-adenosyl-L-methionine (SAM) to 7-keto-8-aminopelargonic acid (KAPA) to form 7,8-diaminopelargonic acid (DAPA). It is the only aminotransferase known to utilize SAM as an amino donor. In Buchnera aphidicola subsp. Baizongia pistaciae (strain Bp), this protein is Adenosylmethionine-8-amino-7-oxononanoate aminotransferase.